Here is a 473-residue protein sequence, read N- to C-terminus: NAD-dependent protein deacetylase SRT1 (473 aa).

Positions 27-267 (SHLLQCKIEE…AGVMESLNMK (241 aa)) constitute a Deacetylase sirtuin-type domain. Residues 52–71 (GAGISTSCGIPDFRGPKGIW) and 114–117 (QNVD) each bind NAD(+). Histidine 134 functions as the Proton acceptor in the catalytic mechanism. The Zn(2+) site is built by cysteine 142, cysteine 145, cysteine 167, and cysteine 172. Residues 209-211 (GTS), 235-237 (NLQ), and valine 253 each bind NAD(+). A disordered region spans residues 447–473 (LEGSGTSRKRSRTGKRKSKALAEETKA). Residues 453–465 (SRKRSRTGKRKSK) show a composition bias toward basic residues.

The protein belongs to the sirtuin family. Class IV subfamily. Binds to the promoter region of genes influenced by ethylene. Interacts with ENAP1; this interaction is enhanced in the presence of ethylene. The cofactor is Zn(2+).

It localises to the nucleus. The catalysed reaction is N(6)-acetyl-L-lysyl-[protein] + NAD(+) + H2O = 2''-O-acetyl-ADP-D-ribose + nicotinamide + L-lysyl-[protein]. NAD-dependent protein deacetylase. Has deacetylase activity towards H3K9Ac. May have a function in the safeguard against genome instability and DNA damage to ensure plant cell growth. Involved in responses to ethylene leading to the transcriptional repression of some ethylene-responsive genes via the regulation of histone acetylation H3K9Ac. The polypeptide is NAD-dependent protein deacetylase SRT1 (Arabidopsis thaliana (Mouse-ear cress)).